The following is a 239-amino-acid chain: tRNA (guanine-N(7)-)-methyltransferase (239 aa).

4 residues coordinate S-adenosyl-L-methionine: glutamate 69, glutamate 94, aspartate 121, and aspartate 144. The active site involves aspartate 144. Lysine 148 contributes to the substrate binding site. The tract at residues 150–155 (RHNKRR) is interaction with RNA. Residues aspartate 180 and 217 to 220 (TKFE) contribute to the substrate site.

It belongs to the class I-like SAM-binding methyltransferase superfamily. TrmB family. In terms of assembly, monomer.

The enzyme catalyses guanosine(46) in tRNA + S-adenosyl-L-methionine = N(7)-methylguanosine(46) in tRNA + S-adenosyl-L-homocysteine. It participates in tRNA modification; N(7)-methylguanine-tRNA biosynthesis. Functionally, catalyzes the formation of N(7)-methylguanine at position 46 (m7G46) in tRNA. The protein is tRNA (guanine-N(7)-)-methyltransferase of Shigella dysenteriae serotype 1 (strain Sd197).